We begin with the raw amino-acid sequence, 684 residues long: Glycine--tRNA ligase beta subunit (684 aa).

It belongs to the class-II aminoacyl-tRNA synthetase family. In terms of assembly, tetramer of two alpha and two beta subunits.

Its subcellular location is the cytoplasm. It catalyses the reaction tRNA(Gly) + glycine + ATP = glycyl-tRNA(Gly) + AMP + diphosphate. The protein is Glycine--tRNA ligase beta subunit of Pseudomonas putida (strain ATCC 47054 / DSM 6125 / CFBP 8728 / NCIMB 11950 / KT2440).